A 278-amino-acid polypeptide reads, in one-letter code: Putative glycosyltransferase EpsE (278 aa).

The protein belongs to the glycosyltransferase 2 family.

In terms of biological role, may be involved in the production of the exopolysaccharide (EPS) component of the extracellular matrix during biofilm formation. EPS is responsible for the adhesion of chains of cells into bundles. Required for biofilm maintenance. The protein is Putative glycosyltransferase EpsE (epsE) of Bacillus subtilis (strain 168).